Reading from the N-terminus, the 379-residue chain is Alcohol dehydrogenase 1 (379 aa).

Positions 47, 49, 69, 99, 102, 105, 113, and 177 each coordinate Zn(2+). Thr49 and His69 together coordinate an alcohol. Residue Thr49 participates in NAD(+) binding. Residues 202–207 (GLGAVG), Asp226, Arg231, Thr272, Val295, 295–297 (VGV), Phe322, and Arg372 contribute to the NAD(+) site.

The protein belongs to the zinc-containing alcohol dehydrogenase family. As to quaternary structure, homodimer. Zn(2+) is required as a cofactor.

Its subcellular location is the cytoplasm. The catalysed reaction is a primary alcohol + NAD(+) = an aldehyde + NADH + H(+). It catalyses the reaction a secondary alcohol + NAD(+) = a ketone + NADH + H(+). The polypeptide is Alcohol dehydrogenase 1 (ADH1) (Oryza sativa subsp. indica (Rice)).